Consider the following 186-residue polypeptide: Ribosome-recycling factor (186 aa).

Belongs to the RRF family.

The protein localises to the cytoplasm. In terms of biological role, responsible for the release of ribosomes from messenger RNA at the termination of protein biosynthesis. May increase the efficiency of translation by recycling ribosomes from one round of translation to another. The protein is Ribosome-recycling factor of Chlorobium phaeobacteroides (strain BS1).